Reading from the N-terminus, the 88-residue chain is Synaptonemal complex central element protein 3 (88 aa).

Residues 8–75 (ERSYDNMLKM…FLNCKEEMEK (68 aa)) are a coiled coil.

In terms of assembly, homodimer. Can form higher-order homooligomers. Interacts with SYCP1 (via tetrameric core); the interaction remodels SYCP1 homotetramers to 2:1 heterotrimers with SYCE3. SYCP1/SYCE3 heterotrimers form lattice assemblies as part of the mature synaptonemal complex via both lateral and head-to-head interactions. Interacts with the SYCE1-SIX6OS1 complex; the interaction recruits the SYCE1-SIX6OS1 complex to the central element of the synaptonemal complex. Interacts with the SYCE2-TEX12 complex; the interaction promotes fibrous assembly of SYCE2-TEX12 as part of the synaptonemal complex central element. Interacts with SYCE1. Interacts with SYCE2. Interacts with proteasome subunit PSMA8; to participate in meiosis progression during spermatogenesis. Interacts with SPO16. In terms of tissue distribution, expression is restricted to spermatocytes and is absent in spermatogonia, spermatids and spermatogonia (at protein level). Expressed in adult testis and embryonic ovary. Expressed in the convoluted seminiferous tubules in spermatogonia and spermatocytes.

Its subcellular location is the nucleus. It localises to the chromosome. Major component of the transverse central element of synaptonemal complexes (SCS), formed between homologous chromosomes during meiotic prophase. Required for the assembly of the central element of the synaptonemal complex during meiosis, via remodeling of SYCP1 lattice structures and promoting recruitment of SYCE2-TEX12 and SYCE1-SIX60S1 complexes. Required for chromosome loading of the central element-specific SCS proteins, and for initiating synapsis between homologous chromosomes. Chromosome loading appears to require SYCP1. Required for fertility and normal testis development. May play a role in apoptosis of spermatogenic cells and pathogenesis of cryptorchidism. The protein is Synaptonemal complex central element protein 3 of Mus musculus (Mouse).